A 340-amino-acid polypeptide reads, in one-letter code: Phenylalanine--tRNA ligase alpha subunit (340 aa).

Glu251 provides a ligand contact to Mg(2+).

This sequence belongs to the class-II aminoacyl-tRNA synthetase family. Phe-tRNA synthetase alpha subunit type 1 subfamily. In terms of assembly, tetramer of two alpha and two beta subunits. Mg(2+) serves as cofactor.

It is found in the cytoplasm. It carries out the reaction tRNA(Phe) + L-phenylalanine + ATP = L-phenylalanyl-tRNA(Phe) + AMP + diphosphate + H(+). The chain is Phenylalanine--tRNA ligase alpha subunit from Porphyromonas gingivalis (strain ATCC 33277 / DSM 20709 / CIP 103683 / JCM 12257 / NCTC 11834 / 2561).